A 304-amino-acid polypeptide reads, in one-letter code: MSLNPPIFLKRSEENSSKFVETKQSQTTSIASEDPLQNLCLASQEVLQKAQQSGRSKCLKCGGSRMFYCYTCYVPVENVPIEQIPLVKLPLKIDIIKHPNETDGKSTAIHAKLLAPEFVNIYTYPCIPEYEEKDHEVALIFPGPQSISIKDISFHLQKRIQNNVRGKNDDPDKPSFKRKRTEEQEFCDLNDSKCKGTTLKKIIFIDSTWNQTNKIFTDERLQGLLQVELKTRKTCFWRHQKGKPDTFLSTIEAIYYFLVDYHTDILKEKYRGQYDNLLFFYSFMYQLIKNAKCSGDKETGKLTH.

Serine 2 is subject to N-acetylserine. A DXTW motif is present at residues 206 to 209 (DSTW).

It belongs to the TDD superfamily. DTWD1 family.

The protein resides in the nucleus. The catalysed reaction is a uridine in tRNA + S-adenosyl-L-methionine = a 3-[(3S)-3-amino-3-carboxypropyl]uridine in tRNA + S-methyl-5'-thioadenosine + H(+). Its function is as follows. Catalyzes the formation of 3-(3-amino-3-carboxypropyl)uridine (acp3U) at position 20 in the D-loop of several cytoplasmic tRNAs (acp3U(20)). The sequence is that of tRNA-uridine aminocarboxypropyltransferase 1 from Homo sapiens (Human).